We begin with the raw amino-acid sequence, 511 residues long: Cobyric acid synthase (511 aa).

The GATase cobBQ-type domain occupies 251–443 (LLDIAIICLP…IHGIFDNDVF (193 aa)). Cysteine 332 acts as the Nucleophile in catalysis. Residue histidine 435 is part of the active site.

The protein belongs to the CobB/CobQ family. CobQ subfamily.

It participates in cofactor biosynthesis; adenosylcobalamin biosynthesis. Functionally, catalyzes amidations at positions B, D, E, and G on adenosylcobyrinic A,C-diamide. NH(2) groups are provided by glutamine, and one molecule of ATP is hydrogenolyzed for each amidation. This is Cobyric acid synthase from Listeria monocytogenes serovar 1/2a (strain ATCC BAA-679 / EGD-e).